Here is a 207-residue protein sequence, read N- to C-terminus: Large ribosomal subunit protein uL4 (207 aa).

The tract at residues 49–78 (HAVKNRSAVSGGGRKPWRQKGTGRARQGSI) is disordered.

The protein belongs to the universal ribosomal protein uL4 family. Part of the 50S ribosomal subunit.

Its function is as follows. One of the primary rRNA binding proteins, this protein initially binds near the 5'-end of the 23S rRNA. It is important during the early stages of 50S assembly. It makes multiple contacts with different domains of the 23S rRNA in the assembled 50S subunit and ribosome. Forms part of the polypeptide exit tunnel. This chain is Large ribosomal subunit protein uL4, found in Streptococcus pneumoniae serotype 2 (strain D39 / NCTC 7466).